A 327-amino-acid polypeptide reads, in one-letter code: E3 ubiquitin ligase RNF121 (327 aa).

The residue at position 2 (Ala2) is an N-acetylalanine. Helical transmembrane passes span 50 to 70, 79 to 99, 100 to 120, 148 to 168, and 172 to 192; these read MHAE…LLLV, SYNM…TVKL, HWWR…FVTF, ATGI…NLLF, and PEDA…YGVL. Residues 226 to 276 form an RING-type; atypical zinc finger; sequence CAVCGQQIFVDVSEEGIIENTYRLSCNHVFHEFCIRGWCIVGKKQTCPYCK. The helical transmembrane segment at 306 to 326 threads the bilayer; the sequence is LVAWQPVIIGVVQGINYILGL.

The protein belongs to the RNF121 family.

The protein localises to the endoplasmic reticulum membrane. It catalyses the reaction S-ubiquitinyl-[E2 ubiquitin-conjugating enzyme]-L-cysteine + [acceptor protein]-L-lysine = [E2 ubiquitin-conjugating enzyme]-L-cysteine + N(6)-ubiquitinyl-[acceptor protein]-L-lysine.. The protein operates within protein modification; protein ubiquitination. In terms of biological role, E3 ubiquitin ligase which accepts ubiquitin and transfers it to substrates thereby promoting their degradation by the endoplasmic reticulum-associated degradation (ERAD) pathway which is a pathway involved in ubiquitin-dependent degradation of misfolded endoplasmic reticulum proteins. May regulate the unfolded protein response to reduce endoplasmic reticulum stress. This Homo sapiens (Human) protein is E3 ubiquitin ligase RNF121 (RNF121).